Consider the following 311-residue polypeptide: Aspartate carbamoyltransferase catalytic subunit (311 aa).

Residues arginine 58 and threonine 59 each contribute to the carbamoyl phosphate site. Lysine 86 lines the L-aspartate pocket. Carbamoyl phosphate-binding residues include arginine 108, histidine 136, and glutamine 139. 2 residues coordinate L-aspartate: arginine 169 and arginine 223. Positions 264 and 265 each coordinate carbamoyl phosphate.

The protein belongs to the aspartate/ornithine carbamoyltransferase superfamily. ATCase family. Heterododecamer (2C3:3R2) of six catalytic PyrB chains organized as two trimers (C3), and six regulatory PyrI chains organized as three dimers (R2).

The enzyme catalyses carbamoyl phosphate + L-aspartate = N-carbamoyl-L-aspartate + phosphate + H(+). It functions in the pathway pyrimidine metabolism; UMP biosynthesis via de novo pathway; (S)-dihydroorotate from bicarbonate: step 2/3. In terms of biological role, catalyzes the condensation of carbamoyl phosphate and aspartate to form carbamoyl aspartate and inorganic phosphate, the committed step in the de novo pyrimidine nucleotide biosynthesis pathway. This Pelodictyon phaeoclathratiforme (strain DSM 5477 / BU-1) protein is Aspartate carbamoyltransferase catalytic subunit.